A 158-amino-acid chain; its full sequence is Transcriptional repressor NrdR (158 aa).

A zinc finger spans residues Cys3–Cys34. In terms of domain architecture, ATP-cone spans Val49–Thr139.

This sequence belongs to the NrdR family. Requires Zn(2+) as cofactor.

Its function is as follows. Negatively regulates transcription of bacterial ribonucleotide reductase nrd genes and operons by binding to NrdR-boxes. This Clostridium novyi (strain NT) protein is Transcriptional repressor NrdR.